A 430-amino-acid polypeptide reads, in one-letter code: Histidine--tRNA ligase (430 aa).

Belongs to the class-II aminoacyl-tRNA synthetase family. Homodimer.

The protein resides in the cytoplasm. The catalysed reaction is tRNA(His) + L-histidine + ATP = L-histidyl-tRNA(His) + AMP + diphosphate + H(+). The polypeptide is Histidine--tRNA ligase (Synechococcus sp. (strain CC9902)).